Consider the following 447-residue polypeptide: Bifunctional protein GlmU (447 aa).

Residues 1–225 form a pyrophosphorylase region; it reads MLTVAILAAG…NGELQGINNR (225 aa). Residues 7–10, Lys21, Gln73, and 78–79 each bind UDP-N-acetyl-alpha-D-glucosamine; these read LAAG and GT. Asp103 lines the Mg(2+) pocket. UDP-N-acetyl-alpha-D-glucosamine is bound by residues Gly140, Glu154, Asn169, and Asn223. Asn223 contacts Mg(2+). The segment at 226 to 246 is linker; that stretch reads VQLSKCEETIQNLIKEKHMLG. The tract at residues 247 to 447 is N-acetyltransferase; sequence GVTFINPASC…QVNIENWKKN (201 aa). UDP-N-acetyl-alpha-D-glucosamine-binding residues include Arg328 and Lys346. Catalysis depends on His358, which acts as the Proton acceptor. Positions 361 and 372 each coordinate UDP-N-acetyl-alpha-D-glucosamine. 3 residues coordinate acetyl-CoA: Ala375, Ala418, and Arg435.

It in the N-terminal section; belongs to the N-acetylglucosamine-1-phosphate uridyltransferase family. In the C-terminal section; belongs to the transferase hexapeptide repeat family. Homotrimer. The cofactor is Mg(2+).

Its subcellular location is the cytoplasm. The enzyme catalyses alpha-D-glucosamine 1-phosphate + acetyl-CoA = N-acetyl-alpha-D-glucosamine 1-phosphate + CoA + H(+). It catalyses the reaction N-acetyl-alpha-D-glucosamine 1-phosphate + UTP + H(+) = UDP-N-acetyl-alpha-D-glucosamine + diphosphate. Its pathway is nucleotide-sugar biosynthesis; UDP-N-acetyl-alpha-D-glucosamine biosynthesis; N-acetyl-alpha-D-glucosamine 1-phosphate from alpha-D-glucosamine 6-phosphate (route II): step 2/2. It functions in the pathway nucleotide-sugar biosynthesis; UDP-N-acetyl-alpha-D-glucosamine biosynthesis; UDP-N-acetyl-alpha-D-glucosamine from N-acetyl-alpha-D-glucosamine 1-phosphate: step 1/1. The protein operates within bacterial outer membrane biogenesis; LPS lipid A biosynthesis. Its function is as follows. Catalyzes the last two sequential reactions in the de novo biosynthetic pathway for UDP-N-acetylglucosamine (UDP-GlcNAc). The C-terminal domain catalyzes the transfer of acetyl group from acetyl coenzyme A to glucosamine-1-phosphate (GlcN-1-P) to produce N-acetylglucosamine-1-phosphate (GlcNAc-1-P), which is converted into UDP-GlcNAc by the transfer of uridine 5-monophosphate (from uridine 5-triphosphate), a reaction catalyzed by the N-terminal domain. The sequence is that of Bifunctional protein GlmU from Prochlorococcus marinus (strain MIT 9515).